The primary structure comprises 254 residues: 5-oxoprolinase subunit A (254 aa).

This sequence belongs to the LamB/PxpA family. In terms of assembly, forms a complex composed of PxpA, PxpB and PxpC.

It carries out the reaction 5-oxo-L-proline + ATP + 2 H2O = L-glutamate + ADP + phosphate + H(+). Catalyzes the cleavage of 5-oxoproline to form L-glutamate coupled to the hydrolysis of ATP to ADP and inorganic phosphate. The protein is 5-oxoprolinase subunit A of Burkholderia orbicola (strain MC0-3).